The sequence spans 357 residues: N-acetyl-gamma-glutamyl-phosphate reductase (357 aa).

Cys-151 is a catalytic residue.

The protein belongs to the NAGSA dehydrogenase family. Type 1 subfamily.

It localises to the cytoplasm. It catalyses the reaction N-acetyl-L-glutamate 5-semialdehyde + phosphate + NADP(+) = N-acetyl-L-glutamyl 5-phosphate + NADPH + H(+). It functions in the pathway amino-acid biosynthesis; L-arginine biosynthesis; N(2)-acetyl-L-ornithine from L-glutamate: step 3/4. Catalyzes the NADPH-dependent reduction of N-acetyl-5-glutamyl phosphate to yield N-acetyl-L-glutamate 5-semialdehyde. The chain is N-acetyl-gamma-glutamyl-phosphate reductase from Corynebacterium kroppenstedtii (strain DSM 44385 / JCM 11950 / CIP 105744 / CCUG 35717).